We begin with the raw amino-acid sequence, 137 residues long: MKFYETMFILKPTLVEVEIKARLDFFKEVIIKNGGEIETCLDMGMRNLAYEIKKNKRGYYFVIYFKAQPSLILELERNYRINEEILRFIVIKYESKKEQSAWQSLVNKANNKPEPKPTKAKKEDVAPEAKEQAQTEA.

A disordered region spans residues 104–137 (SLVNKANNKPEPKPTKAKKEDVAPEAKEQAQTEA). The segment covering 111 to 137 (NKPEPKPTKAKKEDVAPEAKEQAQTEA) has biased composition (basic and acidic residues).

The protein belongs to the bacterial ribosomal protein bS6 family.

Functionally, binds together with bS18 to 16S ribosomal RNA. This Helicobacter hepaticus (strain ATCC 51449 / 3B1) protein is Small ribosomal subunit protein bS6.